The primary structure comprises 229 residues: Cytidylate kinase (229 aa).

12–20 (GPSGTGKSS) provides a ligand contact to ATP.

The protein belongs to the cytidylate kinase family. Type 1 subfamily.

It is found in the cytoplasm. It carries out the reaction CMP + ATP = CDP + ADP. The enzyme catalyses dCMP + ATP = dCDP + ADP. This is Cytidylate kinase from Rhodococcus opacus (strain B4).